The chain runs to 141 residues: Prefoldin subunit alpha (141 aa).

Belongs to the prefoldin subunit alpha family. Heterohexamer of two alpha and four beta subunits.

The protein localises to the cytoplasm. Functionally, molecular chaperone capable of stabilizing a range of proteins. Seems to fulfill an ATP-independent, HSP70-like function in archaeal de novo protein folding. The chain is Prefoldin subunit alpha (pfdA) from Methanothermobacter thermautotrophicus (strain ATCC 29096 / DSM 1053 / JCM 10044 / NBRC 100330 / Delta H) (Methanobacterium thermoautotrophicum).